The following is a 453-amino-acid chain: Probable L-galactonate transporter (453 aa).

The interval 1–23 is disordered; that stretch reads MEKENITIDPRSSFTPSSSADIP. The Periplasmic portion of the chain corresponds to 1–42; the sequence is MEKENITIDPRSSFTPSSSADIPVPPDGLVQRSTRIKRIQTT. A compositionally biased stretch (polar residues) spans 10-20; sequence PRSSFTPSSSA. A helical transmembrane segment spans residues 43–63; the sequence is AMLLLFFAAVINYLDRSSLSV. The Cytoplasmic segment spans residues 64 to 71; that stretch reads ANLTIREE. A helical transmembrane segment spans residues 72 to 92; sequence LGLSATEIGALLSVFSLAYGI. Topologically, residues 93-107 are periplasmic; the sequence is AQLPCGPLLDRKGPR. A helical transmembrane segment spans residues 108–128; sequence LMLGLGMFFWSLFQAMSGMVH. The Cytoplasmic portion of the chain corresponds to 129–174; that stretch reads NFTQFVLVRIGMGIGEAPMNPCGVKVINDWFNIKERGRPMGFFNAA. Residues 175–195 form a helical membrane-spanning segment; the sequence is STIGVAVSPPILAAMMLVMGW. Residue Arg196 is a topological domain, periplasmic. Residues 197–217 traverse the membrane as a helical segment; sequence GMFITIGVLGIFLAIGWYMLY. Over 218–259 the chain is Cytoplasmic; that stretch reads RNREHVELTAVEQAYLNAGSVNARRDPLSFAEWRSLFRNRTM. A helical transmembrane segment spans residues 260–280; it reads WGMMLGFSGINYTAWLYLAWL. Over 281–295 the chain is Periplasmic; sequence PGYLQTAYNLDLKST. A helical membrane pass occupies residues 296 to 316; it reads GLMAAIPFLFGAAGMLVNGYV. Topologically, residues 317-332 are cytoplasmic; sequence TDWLVKGGMAPIKSRK. Residues 333 to 353 form a helical membrane-spanning segment; it reads ICIIAGMFCSAAFTLIVPQAT. Residues 354–359 are Periplasmic-facing; it reads TSMTAV. Residues 360–380 form a helical membrane-spanning segment; the sequence is LLIGMALFCIHFAGTSCWGLI. The Cytoplasmic segment spans residues 381 to 394; the sequence is HVAVASRMTASVGS. The helical transmembrane segment at 395–415 threads the bilayer; it reads IQNFASFICASFAPIITGFIV. Residues 416 to 422 are Periplasmic-facing; sequence DTTHSFR. A helical membrane pass occupies residues 423 to 443; sequence LALIICGCVTAAGALAYIFLV. The Cytoplasmic portion of the chain corresponds to 444 to 453; sequence RQPINDPRKD.

Belongs to the major facilitator superfamily. Phthalate permease family.

The protein resides in the cell inner membrane. It carries out the reaction L-galactonate(in) + H(+)(in) = L-galactonate(out) + H(+)(out). In terms of biological role, probably responsible for the transport of L-galactonate from the periplasm across the inner membrane. Is essential for growth on L-galactonate as the sole carbon source. This is Probable L-galactonate transporter (lgoT) from Escherichia coli (strain K12).